The chain runs to 396 residues: S-adenosylmethionine synthase (396 aa).

Position 15 (His15) interacts with ATP. Asp17 lines the Mg(2+) pocket. Residue Glu43 participates in K(+) binding. 2 residues coordinate L-methionine: Glu56 and Gln99. The interval 99–109 is flexible loop; that stretch reads QSSDIAQGVDR. ATP is bound by residues 175-177, 241-242, Asp250, 256-257, Ser273, and Lys277; these read DGK, RF, and RK. L-methionine is bound at residue Asp250. Lys281 contacts L-methionine.

Belongs to the AdoMet synthase family. In terms of assembly, homotetramer; dimer of dimers. Requires Mg(2+) as cofactor. The cofactor is K(+).

The protein resides in the cytoplasm. It carries out the reaction L-methionine + ATP + H2O = S-adenosyl-L-methionine + phosphate + diphosphate. It functions in the pathway amino-acid biosynthesis; S-adenosyl-L-methionine biosynthesis; S-adenosyl-L-methionine from L-methionine: step 1/1. Its function is as follows. Catalyzes the formation of S-adenosylmethionine (AdoMet) from methionine and ATP. The overall synthetic reaction is composed of two sequential steps, AdoMet formation and the subsequent tripolyphosphate hydrolysis which occurs prior to release of AdoMet from the enzyme. In Pelotomaculum thermopropionicum (strain DSM 13744 / JCM 10971 / SI), this protein is S-adenosylmethionine synthase.